We begin with the raw amino-acid sequence, 313 residues long: Ribosomal RNA small subunit methyltransferase H (313 aa).

Residues Gly31–His33, Asp51, Phe77, Asp95, and Gln102 contribute to the S-adenosyl-L-methionine site.

Belongs to the methyltransferase superfamily. RsmH family.

It is found in the cytoplasm. The enzyme catalyses cytidine(1402) in 16S rRNA + S-adenosyl-L-methionine = N(4)-methylcytidine(1402) in 16S rRNA + S-adenosyl-L-homocysteine + H(+). Specifically methylates the N4 position of cytidine in position 1402 (C1402) of 16S rRNA. This is Ribosomal RNA small subunit methyltransferase H from Xylella fastidiosa (strain M12).